The primary structure comprises 430 residues: ATP-dependent RNA helicase RhlB (430 aa).

The short motif at 9–37 is the Q motif element; it reads QKFSDFALHPQVIEALETKGFHNCTPIQA. The Helicase ATP-binding domain maps to 40–219; that stretch reads LPFTLSGRDV…FENMNNAEYV (180 aa). 53–60 serves as a coordination point for ATP; the sequence is AQTGTGKT. The short motif at 165-168 is the DEAD box element; the sequence is DEAD. The region spanning 245-390 is the Helicase C-terminal domain; sequence RLLQTLIEEE…VSRYNSDALM (146 aa). The tract at residues 388-430 is disordered; the sequence is ALMTDLPPPKRLTRNRSGNGPRRGGNNNRRSSASRSPNRKRSG. The span at 402–423 shows a compositional bias: low complexity; that stretch reads NRSGNGPRRGGNNNRRSSASRS.

The protein belongs to the DEAD box helicase family. RhlB subfamily. Component of the RNA degradosome, which is a multiprotein complex involved in RNA processing and mRNA degradation.

The protein resides in the cytoplasm. The enzyme catalyses ATP + H2O = ADP + phosphate + H(+). DEAD-box RNA helicase involved in RNA degradation. Has RNA-dependent ATPase activity and unwinds double-stranded RNA. The sequence is that of ATP-dependent RNA helicase RhlB from Erwinia tasmaniensis (strain DSM 17950 / CFBP 7177 / CIP 109463 / NCPPB 4357 / Et1/99).